A 585-amino-acid chain; its full sequence is Glutamate decarboxylase 2 (585 aa).

Positions 1-24 (MASPGSGFWSFGSEDGSADPENPG) are disordered. 4 positions are modified to phosphoserine: serine 3, serine 6, serine 10, and serine 13. S-palmitoyl cysteine attachment occurs at residues cysteine 30 and cysteine 45. Residue 181–183 (QLS) participates in substrate binding. N6-(pyridoxal phosphate)lysine is present on lysine 396. Arginine 558 is a binding site for substrate.

The protein belongs to the group II decarboxylase family. Homodimer. Requires pyridoxal 5'-phosphate as cofactor. Phosphorylated; which does not affect kinetic parameters or subcellular location. Post-translationally, palmitoylated; which is required for presynaptic clustering.

The protein resides in the cytoplasm. Its subcellular location is the cytosol. It is found in the cytoplasmic vesicle. The protein localises to the presynaptic cell membrane. It localises to the golgi apparatus membrane. The enzyme catalyses L-glutamate + H(+) = 4-aminobutanoate + CO2. Its function is as follows. Catalyzes the production of GABA. This is Glutamate decarboxylase 2 (Gad2) from Mus musculus (Mouse).